Consider the following 209-residue polypeptide: Auxin-binding protein ABP19b (209 aa).

The signal sequence occupies residues 1–18; sequence MIFPIFFTFFLLLSTSHA. A disulfide bridge connects residues C24 and C39. One can recognise a Cupin type-1 domain in the interval 53-199; it reads SGLGIAGNTT…TTLLDAPQIK (147 aa). N-linked (GlcNAc...) asparagine glycosylation occurs at N60. 4 residues coordinate Mn(2+): H101, H103, E108, and H147.

It belongs to the germin family. As to quaternary structure, interacts with ABP20.

The protein resides in the secreted. Its subcellular location is the extracellular space. It is found in the apoplast. The protein localises to the cell wall. In terms of biological role, probable receptor for the plant growth-promoting hormone auxin. In Prunus persica (Peach), this protein is Auxin-binding protein ABP19b (ABP19B).